The sequence spans 88 residues: M-zodatoxin-Lt1a (88 aa).

A signal peptide spans 1–22 (MKYFVVALALAVALVCIAESTA). A propeptide spanning residues 23-62 (YDVNEELENELDDLSDAAWLAKAAEDLQALDDFEESEESR) is cleaved from the precursor. The short motif at 59 to 62 (EESR) is the Processing quadruplet motif element.

In terms of processing, cleavage of the propeptide depends on the processing quadruplet motif (XXXR, with at least one of X being E). In terms of tissue distribution, expressed by the venom gland.

The protein localises to the secreted. Has antimicrobial activity against Gram-positive bacteria (A.globiformis VKM Ac-1112 (MIC=0.5 uM), and B.subtilis VKM B-501 (MIC=1.0 uM)), Gram-negative bacteria (E.coli DH5-alpha (MIC=1.0 uM), E.coli MH1 (MIC=0.7 uM), and P.aeruginosa PAO1 (MIC=4.1 uM)), and yeasts (P.pastoris GS115 (MIC=17 uM), and S.cerevisiae Y190 (MIC&gt;33 uM)). Has a moderate hemolytic activity against rabbit erythrocytes. Causes paralysis, but is not lethal when injected into insect (M.domestica) larvae. The sequence is that of M-zodatoxin-Lt1a from Lachesana tarabaevi (Spider).